A 147-amino-acid polypeptide reads, in one-letter code: Nucleoside diphosphate kinase (147 aa).

ATP contacts are provided by lysine 9, arginine 85, threonine 91, arginine 102, and asparagine 112. Histidine 115 (pros-phosphohistidine intermediate) is an active-site residue.

It belongs to the NDK family. The cofactor is Mg(2+).

The enzyme catalyses a 2'-deoxyribonucleoside 5'-diphosphate + ATP = a 2'-deoxyribonucleoside 5'-triphosphate + ADP. The catalysed reaction is a ribonucleoside 5'-diphosphate + ATP = a ribonucleoside 5'-triphosphate + ADP. Functionally, major role in the synthesis of nucleoside triphosphates other than ATP. The ATP gamma phosphate is transferred to the NDP beta phosphate via a ping-pong mechanism, using a phosphorylated active-site intermediate. This is Nucleoside diphosphate kinase (NDK1) from Encephalitozoon cuniculi (strain GB-M1) (Microsporidian parasite).